Reading from the N-terminus, the 1055-residue chain is Type I restriction enzyme HindI endonuclease subunit (1055 aa).

A Helicase ATP-binding domain is found at 287–468 (TSEKGDRRIG…QDVFGRYVSI (182 aa)).

This sequence belongs to the HsdR family. In terms of assembly, the type I restriction/modification system is composed of three polypeptides R, M and S; the restriction enzyme has stoichiometry R(2)M(2)S(1) while the methyltransferase is M(2)S(1).

The enzyme catalyses Endonucleolytic cleavage of DNA to give random double-stranded fragments with terminal 5'-phosphates, ATP is simultaneously hydrolyzed.. The restriction (R) subunit of a type I restriction enzyme that recognizes 5'-RAACN(5)TAG-3' and cleaves a random distance away. Subunit R is required for both nuclease and ATPase activities, but not for modification. After locating a non-methylated recognition site, the enzyme complex serves as a molecular motor that translocates DNA in an ATP-dependent manner until a collision occurs that triggers cleavage. The protein is Type I restriction enzyme HindI endonuclease subunit of Haemophilus influenzae (strain ATCC 51907 / DSM 11121 / KW20 / Rd).